Reading from the N-terminus, the 338-residue chain is DNA-directed RNA polymerase subunit alpha (338 aa).

The interval 1–234 (MIQKNWQELI…DQLEIFVNFE (234 aa)) is alpha N-terminal domain (alpha-NTD). An alpha C-terminal domain (alpha-CTD) region spans residues 250-338 (FSPALLKKVD…ELAKRFEEHY (89 aa)).

Belongs to the RNA polymerase alpha chain family. As to quaternary structure, homodimer. The RNAP catalytic core consists of 2 alpha, 1 beta, 1 beta' and 1 omega subunit. When a sigma factor is associated with the core the holoenzyme is formed, which can initiate transcription.

The catalysed reaction is RNA(n) + a ribonucleoside 5'-triphosphate = RNA(n+1) + diphosphate. In terms of biological role, DNA-dependent RNA polymerase catalyzes the transcription of DNA into RNA using the four ribonucleoside triphosphates as substrates. This Xanthobacter autotrophicus (strain ATCC BAA-1158 / Py2) protein is DNA-directed RNA polymerase subunit alpha.